Consider the following 346-residue polypeptide: MEYLKDISSSLSGWEFNFAPGWQSVTASVLLVAGGWFVVSRVWTFLRVLTSLFVLPGKSLRSFGPKGSWAIVTGASDGLGKEFALQIARAGYNIVLVSRTASKLTALTDEITSKYPSVQTKMLAMDFARNLDEDYEKLKALIQDLDVAILINNVGKSHSIPVPFALTPEDELADIITINCMGTLRVTQLVVPGMTQRKRGLILTMGSFGGLVPSPLLATYSGSKAFLQQWSTALGSELQPYGITVELVQAYLITSAMSKIRKTSALIPNPRAFVKATLSKIGNNGGSPGYAYSSSPYWSHGLVAYLATCVINPMSKWLANQNKAMHESIRKRALRKAERENAKKSS.

The chain crosses the membrane as a helical span at residues 26–46 (TASVLLVAGGWFVVSRVWTFL). NADP(+) is bound by residues Ile71, Asp126, Asp134, Asn153, Tyr220, Lys224, Ile253, and Ser255. The active-site Proton donor is the Tyr220. Residue Lys224 is the Lowers pKa of active site Tyr of the active site.

This sequence belongs to the short-chain dehydrogenases/reductases (SDR) family.

It localises to the endoplasmic reticulum membrane. The catalysed reaction is a very-long-chain (3R)-3-hydroxyacyl-CoA + NADP(+) = a very-long-chain 3-oxoacyl-CoA + NADPH + H(+). It participates in lipid metabolism; fatty acid biosynthesis. Component of the microsomal membrane bound fatty acid elongation system, which produces the 26-carbon very long-chain fatty acids (VLCFA) from palmitate. Catalyzes the reduction of the 3-ketoacyl-CoA intermediate that is formed in each cycle of fatty acid elongation. VLCFAs serve as precursors for ceramide and sphingolipids. This Emericella nidulans (strain FGSC A4 / ATCC 38163 / CBS 112.46 / NRRL 194 / M139) (Aspergillus nidulans) protein is Very-long-chain 3-oxoacyl-CoA reductase.